The sequence spans 92 residues: C-C motif chemokine 3 (92 aa).

An N-terminal signal peptide occupies residues 1–19 (MKVPGAALAVLLCTMSLCS). Cystine bridges form between Cys-33/Cys-57 and Cys-34/Cys-73.

The protein belongs to the intercrine beta (chemokine CC) family. As to quaternary structure, self-associates. Also heterodimer of MIP-1-alpha(4-69) and MIP-1-beta(3-69). Interacts with CCR1.

The protein localises to the secreted. In terms of biological role, monokine with inflammatory and chemokinetic properties. Binds to CCR1, CCR4 and CCR5. One of the major HIV-suppressive factors produced by CD8+ T-cells. Recombinant MIP-1-alpha induces a dose-dependent inhibition of different strains of HIV-1, HIV-2, and simian immunodeficiency virus (SIV). The protein is C-C motif chemokine 3 (CCL3) of Canis lupus familiaris (Dog).